The primary structure comprises 379 residues: Cytochrome b (379 aa).

4 consecutive transmembrane segments (helical) span residues Phe33–Met53, Trp77–Ile98, Trp113–Leu133, and Phe178–Leu198. Positions 83 and 97 each coordinate heme b. 2 residues coordinate heme b: His182 and His196. An a ubiquinone-binding site is contributed by His201. A run of 4 helical transmembrane segments spans residues Tyr226–Tyr246, Leu288–His308, Ala320–Gly340, and Tyr347–Pro367.

Belongs to the cytochrome b family. As to quaternary structure, the cytochrome bc1 complex contains 3 respiratory subunits (MT-CYB, CYC1 and UQCRFS1), 2 core proteins (UQCRC1 and UQCRC2) and probably 6 low-molecular weight proteins. Heme b serves as cofactor.

The protein localises to the mitochondrion inner membrane. Component of the ubiquinol-cytochrome c reductase complex (complex III or cytochrome b-c1 complex) that is part of the mitochondrial respiratory chain. The b-c1 complex mediates electron transfer from ubiquinol to cytochrome c. Contributes to the generation of a proton gradient across the mitochondrial membrane that is then used for ATP synthesis. The sequence is that of Cytochrome b (mt-cyb) from Anguilla reinhardtii (Speckled longfin eel).